Here is a 313-residue protein sequence, read N- to C-terminus: Hsp90 co-chaperone Cdc37-like 1 (313 aa).

The protein belongs to the CDC37 family. Forms complexes with Hsp70 and Hsp90.

It is found in the cytoplasm. In terms of biological role, co-chaperone that binds to numerous proteins and promotes their interaction with Hsp70 and Hsp90. In Danio rerio (Zebrafish), this protein is Hsp90 co-chaperone Cdc37-like 1 (cdc37l1).